Consider the following 278-residue polypeptide: Pantothenate synthetase (278 aa).

30–37 provides a ligand contact to ATP; that stretch reads MGGLHQGH. His-37 serves as the catalytic Proton donor. (R)-pantoate is bound at residue Gln-61. A beta-alanine-binding site is contributed by Gln-61. 146–149 lines the ATP pocket; it reads GQKD. Residue Gln-152 coordinates (R)-pantoate. ATP-binding positions include Ile-175 and 183–186; that span reads MSTR.

This sequence belongs to the pantothenate synthetase family. As to quaternary structure, homodimer.

The protein resides in the cytoplasm. It catalyses the reaction (R)-pantoate + beta-alanine + ATP = (R)-pantothenate + AMP + diphosphate + H(+). It functions in the pathway cofactor biosynthesis; (R)-pantothenate biosynthesis; (R)-pantothenate from (R)-pantoate and beta-alanine: step 1/1. Catalyzes the condensation of pantoate with beta-alanine in an ATP-dependent reaction via a pantoyl-adenylate intermediate. This is Pantothenate synthetase from Ruthia magnifica subsp. Calyptogena magnifica.